The primary structure comprises 387 residues: Phosphoglycerate kinase (387 aa).

Residues 21–23 (DLN), Arg-36, 59–62 (HLGR), Arg-113, and Arg-146 contribute to the substrate site. ATP-binding positions include Lys-197, Glu-314, and 340-343 (GGDT).

The protein belongs to the phosphoglycerate kinase family. In terms of assembly, monomer.

It is found in the cytoplasm. It carries out the reaction (2R)-3-phosphoglycerate + ATP = (2R)-3-phospho-glyceroyl phosphate + ADP. The protein operates within carbohydrate degradation; glycolysis; pyruvate from D-glyceraldehyde 3-phosphate: step 2/5. This Tolumonas auensis (strain DSM 9187 / NBRC 110442 / TA 4) protein is Phosphoglycerate kinase.